A 557-amino-acid chain; its full sequence is Dihydroxy-acid dehydratase (557 aa).

Position 78 (Asp-78) interacts with Mg(2+). Residue Cys-119 coordinates [2Fe-2S] cluster. The Mg(2+) site is built by Asp-120 and Lys-121. Lys-121 bears the N6-carboxylysine mark. [2Fe-2S] cluster is bound at residue Cys-192. Glu-442 serves as a coordination point for Mg(2+). The Proton acceptor role is filled by Ser-468.

This sequence belongs to the IlvD/Edd family. As to quaternary structure, homodimer. Requires [2Fe-2S] cluster as cofactor. It depends on Mg(2+) as a cofactor.

It catalyses the reaction (2R)-2,3-dihydroxy-3-methylbutanoate = 3-methyl-2-oxobutanoate + H2O. It carries out the reaction (2R,3R)-2,3-dihydroxy-3-methylpentanoate = (S)-3-methyl-2-oxopentanoate + H2O. The protein operates within amino-acid biosynthesis; L-isoleucine biosynthesis; L-isoleucine from 2-oxobutanoate: step 3/4. It participates in amino-acid biosynthesis; L-valine biosynthesis; L-valine from pyruvate: step 3/4. Its function is as follows. Functions in the biosynthesis of branched-chain amino acids. Catalyzes the dehydration of (2R,3R)-2,3-dihydroxy-3-methylpentanoate (2,3-dihydroxy-3-methylvalerate) into 2-oxo-3-methylpentanoate (2-oxo-3-methylvalerate) and of (2R)-2,3-dihydroxy-3-methylbutanoate (2,3-dihydroxyisovalerate) into 2-oxo-3-methylbutanoate (2-oxoisovalerate), the penultimate precursor to L-isoleucine and L-valine, respectively. This chain is Dihydroxy-acid dehydratase, found in Bacillus cereus (strain ZK / E33L).